Consider the following 605-residue polypeptide: MRTQYCGQVTEQLLGQSVTLSGWAHRRRDHGGVIFIDLRDREGLVQVVCDPDRPEMFKVAEGVRNEFCLQVKGIVRARPEGTTNPNLASGKIEVLCHELTVLNASVTPPFQLDDDNLSETTRLTHRVLDLRRPQMQYNLRLRYKVAMEVRKYLDDKGFIDIETPMLTKSTPEGARDYLVPSRVNAGQFFALPQSPQLFKQMLMVSGFDRYYQITKCFRDEDLRADRQPEFTQIDCETSFLSEQEIRDLFEEMIRTVFQNTMSVALDAKFPVMEFREAMARFGSDKPDLRVKLEFTELTDAMKDVDFKVFSGPANAEGGRVVALRVPGGAALSRGDIDAYTKFVEIYGAKGLAWIKVNEVAKGRDGLQSPIVKNLHDAAIAEILKRSGAQDGDILFFGADRAKVVNDAMGALRLKVGHSDFAKSTGLFEDAWKPLWVVDFPMFEYDEEDARWVAMHHPFTSPKDEHLEYLETDPGKCIAKAYDMVLNGWEIGGGSVRIYREEVQSKVFRALKIGDEEARAKFGFLLDALQYGAPPHGGIAFGLDRVVTMMAGADSIRDVIAFPKTQRAQDLLTQAPSPVDEKQLRELHIRLRAAEAKVAAPAAATA.

An L-aspartate-binding site is contributed by Glu172. Residues 196–199 are aspartate; sequence QLFK. Arg218 is a binding site for L-aspartate. ATP-binding positions include 218-220 and Gln227; that span reads RDE. An L-aspartate-binding site is contributed by His455. Glu489 provides a ligand contact to ATP. Arg496 lines the L-aspartate pocket. 541–544 contacts ATP; it reads GLDR.

The protein belongs to the class-II aminoacyl-tRNA synthetase family. Type 1 subfamily. Homodimer.

The protein localises to the cytoplasm. It carries out the reaction tRNA(Asx) + L-aspartate + ATP = L-aspartyl-tRNA(Asx) + AMP + diphosphate. Functionally, aspartyl-tRNA synthetase with relaxed tRNA specificity since it is able to aspartylate not only its cognate tRNA(Asp) but also tRNA(Asn). Reaction proceeds in two steps: L-aspartate is first activated by ATP to form Asp-AMP and then transferred to the acceptor end of tRNA(Asp/Asn). In Ralstonia nicotianae (strain ATCC BAA-1114 / GMI1000) (Ralstonia solanacearum), this protein is Aspartate--tRNA(Asp/Asn) ligase.